We begin with the raw amino-acid sequence, 432 residues long: Glutamate-1-semialdehyde 2,1-aminomutase 1 (432 aa).

Lys-268 is subject to N6-(pyridoxal phosphate)lysine.

It belongs to the class-III pyridoxal-phosphate-dependent aminotransferase family. HemL subfamily. In terms of assembly, homodimer. Requires pyridoxal 5'-phosphate as cofactor.

The protein localises to the cytoplasm. It carries out the reaction (S)-4-amino-5-oxopentanoate = 5-aminolevulinate. It functions in the pathway porphyrin-containing compound metabolism; protoporphyrin-IX biosynthesis; 5-aminolevulinate from L-glutamyl-tRNA(Glu): step 2/2. The chain is Glutamate-1-semialdehyde 2,1-aminomutase 1 from Bacillus cereus (strain ZK / E33L).